A 355-amino-acid chain; its full sequence is UDP-3-O-acylglucosamine N-acyltransferase (355 aa).

His258 serves as the catalytic Proton acceptor.

It belongs to the transferase hexapeptide repeat family. LpxD subfamily. In terms of assembly, homotrimer.

It catalyses the reaction a UDP-3-O-[(3R)-3-hydroxyacyl]-alpha-D-glucosamine + a (3R)-hydroxyacyl-[ACP] = a UDP-2-N,3-O-bis[(3R)-3-hydroxyacyl]-alpha-D-glucosamine + holo-[ACP] + H(+). It participates in bacterial outer membrane biogenesis; LPS lipid A biosynthesis. Catalyzes the N-acylation of UDP-3-O-acylglucosamine using 3-hydroxyacyl-ACP as the acyl donor. Is involved in the biosynthesis of lipid A, a phosphorylated glycolipid that anchors the lipopolysaccharide to the outer membrane of the cell. This chain is UDP-3-O-acylglucosamine N-acyltransferase, found in Bradyrhizobium diazoefficiens (strain JCM 10833 / BCRC 13528 / IAM 13628 / NBRC 14792 / USDA 110).